The following is a 429-amino-acid chain: Argininosuccinate lyase (429 aa).

It belongs to the lyase 1 family. Argininosuccinate lyase subfamily.

It localises to the cytoplasm. It carries out the reaction 2-(N(omega)-L-arginino)succinate = fumarate + L-arginine. The protein operates within amino-acid biosynthesis; L-arginine biosynthesis; L-arginine from L-ornithine and carbamoyl phosphate: step 3/3. This chain is Argininosuccinate lyase, found in Pyrobaculum neutrophilum (strain DSM 2338 / JCM 9278 / NBRC 100436 / V24Sta) (Thermoproteus neutrophilus).